We begin with the raw amino-acid sequence, 379 residues long: Alcohol dehydrogenase 1 (379 aa).

Zn(2+) is bound by residues Cys-47, Thr-49, His-69, Cys-99, Cys-102, Cys-105, Cys-113, and Cys-177. Residues Thr-49 and His-69 each contribute to the an alcohol site. Thr-49 contacts NAD(+). Residues 202–207 (GLGAVG), Asp-226, Arg-231, Thr-272, Val-295, 295–297 (VGV), Phe-322, and Arg-372 contribute to the NAD(+) site.

This sequence belongs to the zinc-containing alcohol dehydrogenase family. As to quaternary structure, homodimer. Zn(2+) serves as cofactor.

It localises to the cytoplasm. The enzyme catalyses a primary alcohol + NAD(+) = an aldehyde + NADH + H(+). It catalyses the reaction a secondary alcohol + NAD(+) = a ketone + NADH + H(+). The chain is Alcohol dehydrogenase 1 (ADH1) from Zea mays (Maize).